A 350-amino-acid chain; its full sequence is MSQLQVRHDWKREEIEALFALPMNDLLFKAHSIHREVYDPNEVQISRLLSIKTGACPEDCKYCPQSARYDTGLEKERLLAMETVLTEARSAKAAGASRFCMGAAWRNPKEKDMPYLKQMVQEVKALGMETCMTLGMLSAEQANELADAGLDYYNHNLDTSPEYYGDVITTRTYQNRLDTLTHVRASGMKVCSGGIVGMGEKATDRAGLLQQLANLPQHPDSVPINMLVKVAGTPFEKLDDLDPLEFVRTIAVARILMPLSRVRLSAGRENMSDELQAMCFFAGANSIFYGCKLLTTPNPEESDDMGLFRRLGLRPEQGAVATLDDEQAVLAKAAAHQDKSTAQFYDAAAL.

Residues 41 to 268 (NEVQISRLLS…LSRVRLSAGR (228 aa)) form the Radical SAM core domain. Positions 56, 60, and 63 each coordinate [4Fe-4S] cluster. [2Fe-2S] cluster contacts are provided by Cys100, Cys131, Cys191, and Arg263.

This sequence belongs to the radical SAM superfamily. Biotin synthase family. In terms of assembly, homodimer. [4Fe-4S] cluster serves as cofactor. The cofactor is [2Fe-2S] cluster.

The enzyme catalyses (4R,5S)-dethiobiotin + (sulfur carrier)-SH + 2 reduced [2Fe-2S]-[ferredoxin] + 2 S-adenosyl-L-methionine = (sulfur carrier)-H + biotin + 2 5'-deoxyadenosine + 2 L-methionine + 2 oxidized [2Fe-2S]-[ferredoxin]. It participates in cofactor biosynthesis; biotin biosynthesis; biotin from 7,8-diaminononanoate: step 2/2. Catalyzes the conversion of dethiobiotin (DTB) to biotin by the insertion of a sulfur atom into dethiobiotin via a radical-based mechanism. The protein is Biotin synthase of Shewanella putrefaciens (strain CN-32 / ATCC BAA-453).